The following is a 468-amino-acid chain: Ammonium transporter Amt2 (468 aa).

The next 12 helical transmembrane spans lie at 1-21 (MVGRMCVAVLIVLLLVATAGA), 39-59 (FVWALICGFLVMFMQAGFAML), 77-97 (LMDFAVGSLAFFAVGFALMMG), 123-143 (LWFFMLVFAATAATIVSGSIA), 156-176 (AVVSAVIYPIYGHWLWGGGWL), 194-214 (FAGSGVVHALGGYIALAAVML), 236-256 (LAFAVIGTFILWFGWFGFNAG), 268-288 (IIASNTNLAAAAGAVTAMAIT), 297-317 (VGMTCNGAVAGLVAITAPCAW), 321-341 (WSSVVIGTIAGFIATYGYWWL), 350-370 (VGAIPVHGFSGTWGLIALGIF), and 400-420 (LISAIVNFAWAFGTGFALFWI).

This sequence belongs to the ammonia transporter channel (TC 1.A.11.2) family. In terms of assembly, homotrimer.

Its subcellular location is the cell membrane. Functionally, involved in the uptake of ammonium/ammonia (NH(4)(+)/NH(3)). Transport is electrogenic. The polypeptide is Ammonium transporter Amt2 (Archaeoglobus fulgidus (strain ATCC 49558 / DSM 4304 / JCM 9628 / NBRC 100126 / VC-16)).